The following is a 294-amino-acid chain: Deubiquitinase OTUD6B (294 aa).

M1 carries the N-acetylmethionine modification. One can recognise an OTU domain in the interval 148-285 (LEIKQIPSDG…GEHYNSVTRL (138 aa)). Residues 153-159 (IPSDGHC) are cys-loop. The active site involves D156. The Nucleophile role is filled by C159. The variable-loop stretch occupies residues 220-230 (IVNTAAWGGQL). The interval 268 to 278 (YMRHAYGLGEH) is his-loop. The active site involves H278.

In terms of assembly, interacts with the eukaryotic translation initiation factor 4F complex. Ubiquitously expressed. Expression is observed in several organ systems including the cardiovascular, digestive, central and peripheral nervous and musculoskeletal systems.

It carries out the reaction Thiol-dependent hydrolysis of ester, thioester, amide, peptide and isopeptide bonds formed by the C-terminal Gly of ubiquitin (a 76-residue protein attached to proteins as an intracellular targeting signal).. Deubiquitinating enzyme that may play a role in the ubiquitin-dependent regulation of protein synthesis, downstream of mTORC1. May associate with the protein synthesis initiation complex and modify its ubiquitination to repress translation. May also repress DNA synthesis and modify different cellular targets thereby regulating cell growth and proliferation. May also play a role in proteasome assembly and function. This Mus musculus (Mouse) protein is Deubiquitinase OTUD6B.